Reading from the N-terminus, the 79-residue chain is Beta-defensin 15 (79 aa).

Positions 1–20 (MKTFLFLFAVLFFLDPAKNA) are cleaved as a signal peptide. Cystine bridges form between C26–C53, C33–C47, and C37–C54.

The protein belongs to the beta-defensin family. Expressed in testis and to a lesser extent in epididymis (caput, corpus and cauda). Also weakly expressed in kidneys and colon.

Its subcellular location is the secreted. Has antibacterial activity. The chain is Beta-defensin 15 (Defb15) from Mus musculus (Mouse).